Reading from the N-terminus, the 504-residue chain is MSQEKYIMAIDQGTTSSRAIIFNQKGEKVSSSQKEFPQIFPHAGWVEHNANQIWNSVQSVIAGAFIESSIKPSQIEAIGITNQRETTVVWDKKTGVPIYNAIVWQSRQTAPIAEQLKQDGHTKMIHEKTGLVIDAYFSATKIRWILDHVPGAQERAEKGELLFGTIDTWLVWKLTDGAVHVTDYSNAARTMLYNIKDLTWDDEILELLNIPKDMLPEVKSNSEIYGKTAAFHFYGGEVPISGMAGDQQAALFGQLAFDPGMVKNTYGTGSFIIMNTGDEMQLSSNNLLTTIGYGINGKVHYALEGSIFIAGSAIQWLRDGLKMIETSPESEQFALASTSDDEVYVVPAFTGLGAPYWDSNARGSVFGLTRGTSKEDFVKATLQSIAYQVRDVIDTMQVDSGIDIQQLRVDGGAAMNNMLMQFQADILGIDIARAKNLETTALGAAFLAGLAVGYWEDMDALKELNATGQLFKASMNESRKEKLYKGWKRAVKATQVFTQDDDAE.

Residue Thr-14 coordinates ADP. Positions 14, 15, and 16 each coordinate ATP. Thr-14 is a binding site for sn-glycerol 3-phosphate. Position 18 (Arg-18) interacts with ADP. Sn-glycerol 3-phosphate contacts are provided by Arg-84, Glu-85, and Tyr-136. Glycerol contacts are provided by Arg-84, Glu-85, and Tyr-136. Phosphohistidine; by HPr is present on His-232. Residue Asp-246 coordinates sn-glycerol 3-phosphate. Glycerol is bound by residues Asp-246 and Gln-247. Residues Thr-268 and Gly-311 each contribute to the ADP site. Residues Thr-268, Gly-311, Gln-315, and Gly-412 each contribute to the ATP site. ADP contacts are provided by Gly-412 and Asn-416.

This sequence belongs to the FGGY kinase family. As to quaternary structure, homotetramer and homodimer (in equilibrium). The phosphoenolpyruvate-dependent sugar phosphotransferase system (PTS), including enzyme I, and histidine-containing protein (HPr) are required for the phosphorylation, which leads to the activation of the enzyme.

It carries out the reaction glycerol + ATP = sn-glycerol 3-phosphate + ADP + H(+). The protein operates within polyol metabolism; glycerol degradation via glycerol kinase pathway; sn-glycerol 3-phosphate from glycerol: step 1/1. With respect to regulation, activated by phosphorylation and inhibited by fructose 1,6-bisphosphate (FBP). In terms of biological role, key enzyme in the regulation of glycerol uptake and metabolism. Catalyzes the phosphorylation of glycerol to yield sn-glycerol 3-phosphate. The protein is Glycerol kinase of Streptococcus pyogenes serotype M6 (strain ATCC BAA-946 / MGAS10394).